Consider the following 294-residue polypeptide: ATP phosphoribosyltransferase (294 aa).

Belongs to the ATP phosphoribosyltransferase family. Long subfamily. Mg(2+) is required as a cofactor.

It is found in the cytoplasm. The enzyme catalyses 1-(5-phospho-beta-D-ribosyl)-ATP + diphosphate = 5-phospho-alpha-D-ribose 1-diphosphate + ATP. It functions in the pathway amino-acid biosynthesis; L-histidine biosynthesis; L-histidine from 5-phospho-alpha-D-ribose 1-diphosphate: step 1/9. Its activity is regulated as follows. Feedback inhibited by histidine. In terms of biological role, catalyzes the condensation of ATP and 5-phosphoribose 1-diphosphate to form N'-(5'-phosphoribosyl)-ATP (PR-ATP). Has a crucial role in the pathway because the rate of histidine biosynthesis seems to be controlled primarily by regulation of HisG enzymatic activity. This chain is ATP phosphoribosyltransferase, found in Maricaulis maris (strain MCS10) (Caulobacter maris).